Consider the following 222-residue polypeptide: Probable transaldolase (222 aa).

The active-site Schiff-base intermediate with substrate is the lysine 91.

This sequence belongs to the transaldolase family. Type 3B subfamily.

Its subcellular location is the cytoplasm. It carries out the reaction D-sedoheptulose 7-phosphate + D-glyceraldehyde 3-phosphate = D-erythrose 4-phosphate + beta-D-fructose 6-phosphate. Its pathway is carbohydrate degradation; pentose phosphate pathway; D-glyceraldehyde 3-phosphate and beta-D-fructose 6-phosphate from D-ribose 5-phosphate and D-xylulose 5-phosphate (non-oxidative stage): step 2/3. Functionally, transaldolase is important for the balance of metabolites in the pentose-phosphate pathway. The chain is Probable transaldolase from Chlorobium limicola (strain DSM 245 / NBRC 103803 / 6330).